Consider the following 553-residue polypeptide: Nucleoside-diphosphatase mig-23 (553 aa).

Residues 1–8 (MRVSRRFT) lie on the Cytoplasmic side of the membrane. The helical transmembrane segment at 9–29 (ILAITAMIFLSLIICIYAVAA) threads the bilayer. Over 30-489 (HTTVNVILQK…IVKETHSASE (460 aa)) the chain is Lumenal. The active-site Proton acceptor is glutamate 174. N-linked (GlcNAc...) asparagine glycosylation is found at asparagine 190 and asparagine 284. Residues 490–510 (SLWAPLFFLSAVFCLFVLVCA) traverse the membrane as a helical segment. The Cytoplasmic portion of the chain corresponds to 511–553 (KEHSLLCFDDKRRASFGLTRRQYSYKMLKEDRTSSSAFLENFA).

Belongs to the GDA1/CD39 NTPase family.

The protein resides in the golgi apparatus membrane. The enzyme catalyses a ribonucleoside 5'-diphosphate + H2O = a ribonucleoside 5'-phosphate + phosphate + H(+). In terms of biological role, seems to be able to hydrolyze ADP, UDP and GDP. Supports mig-17 glycosylation and surface expression, which is required for proper migration of distal tip cells during gonad morphogenesis. This chain is Nucleoside-diphosphatase mig-23, found in Caenorhabditis briggsae.